The chain runs to 190 residues: Elongation factor P 2 (190 aa).

Belongs to the elongation factor P family.

Its subcellular location is the cytoplasm. Its pathway is protein biosynthesis; polypeptide chain elongation. Involved in peptide bond synthesis. Stimulates efficient translation and peptide-bond synthesis on native or reconstituted 70S ribosomes in vitro. Probably functions indirectly by altering the affinity of the ribosome for aminoacyl-tRNA, thus increasing their reactivity as acceptors for peptidyl transferase. This chain is Elongation factor P 2 (efp2), found in Chlamydia muridarum (strain MoPn / Nigg).